The primary structure comprises 446 residues: Maltoporin (446 aa).

A signal peptide spans 1-25 (MMITLRKLPLAVAVAAGVMSAQAMA).

This sequence belongs to the porin LamB (TC 1.B.3) family. As to quaternary structure, homotrimer formed of three 18-stranded antiparallel beta-barrels, containing three independent channels.

The protein localises to the cell outer membrane. It catalyses the reaction beta-maltose(in) = beta-maltose(out). Involved in the transport of maltose and maltodextrins. The protein is Maltoporin of Escherichia coli (strain K12 / MC4100 / BW2952).